The sequence spans 102 residues: Small ribosomal subunit protein uS10 (102 aa).

The protein belongs to the universal ribosomal protein uS10 family. In terms of assembly, part of the 30S ribosomal subunit.

Functionally, involved in the binding of tRNA to the ribosomes. This chain is Small ribosomal subunit protein uS10, found in Methanoculleus marisnigri (strain ATCC 35101 / DSM 1498 / JR1).